Reading from the N-terminus, the 124-residue chain is Large ribosomal subunit protein bL12 (124 aa).

It belongs to the bacterial ribosomal protein bL12 family. As to quaternary structure, homodimer. Part of the ribosomal stalk of the 50S ribosomal subunit. Forms a multimeric L10(L12)X complex, where L10 forms an elongated spine to which 2 to 4 L12 dimers bind in a sequential fashion. Binds GTP-bound translation factors.

Forms part of the ribosomal stalk which helps the ribosome interact with GTP-bound translation factors. Is thus essential for accurate translation. The sequence is that of Large ribosomal subunit protein bL12 from Sulfurovum sp. (strain NBC37-1).